Reading from the N-terminus, the 97-residue chain is MKIRPLHDRVIVKRKEVESKSAGGIVLTGSAAGKSTRGEVLAVGNGRILESGDVKPLDVKVGDVVIFSEGYGAKTEKIDNQEVLIISESDILAIVEA.

This sequence belongs to the GroES chaperonin family. As to quaternary structure, heptamer of 7 subunits arranged in a ring. Interacts with the chaperonin GroEL.

It localises to the cytoplasm. Together with the chaperonin GroEL, plays an essential role in assisting protein folding. The GroEL-GroES system forms a nano-cage that allows encapsulation of the non-native substrate proteins and provides a physical environment optimized to promote and accelerate protein folding. GroES binds to the apical surface of the GroEL ring, thereby capping the opening of the GroEL channel. The chain is Co-chaperonin GroES from Erwinia tasmaniensis (strain DSM 17950 / CFBP 7177 / CIP 109463 / NCPPB 4357 / Et1/99).